The following is a 1887-amino-acid chain: Bifunctional serine/threonine-protein kinase/NEDD4-like E3 ubiquitin-protein ligase (1887 aa).

Disordered regions lie at residues 19–55 and 72–98; these read TPQV…TTNF and TDNY…TKEN. Low complexity-rich tracts occupy residues 26-54 and 72-97; these read NNSN…STTN and TDNY…NTKE. RCC1 repeat units lie at residues 206–260, 262–314, 356–409, 411–470, 472–528, and 529–581; these read QGNL…ALTI, GKVY…NNNN, KGLL…VLTN, GLVF…AISD, NDTY…AMSI, and DGSL…IVEK. The disordered stretch occupies residues 299-333; that stretch reads NNNNNNNNNNSTNNNNNNNNDGAQQQFSLSQNSSS. Disordered stretches follow at residues 594-619, 823-858, and 1030-1088; these read LPSS…SDSN, VLVH…KNGT, and DDDN…NNNN. Positions 825–839 are enriched in basic and acidic residues; that stretch reads VHQDEKQQQREKSET. Residues 840–852 are compositionally biased toward acidic residues; it reads ELEEEQDEEEEDS. Residues 1036 to 1088 are compositionally biased toward low complexity; sequence ENNSVNNNSNNNNNNNNNNNNNNNNNNNNNNNIDNNINSNSINDSSNNNNNNN. The Protein kinase domain maps to 1158 to 1437; that stretch reads YDIIKTLSTH…AHQIAVHPYF (280 aa). Residues 1164–1172 and K1184 contribute to the ATP site; that span reads LSTHPHNVY. D1281 functions as the Proton acceptor in the catalytic mechanism. Residues 1501-1887 enclose the HECT domain; the sequence is ESNKLFCRLE…LEYVDGFAFI (387 aa). The disordered stretch occupies residues 1586-1628; the sequence is NNNNNNEENNNNNNNNNNNNNNNNNNNNNNNNNNNNNNNNNEE. The active-site Glycyl thioester intermediate is C1855.

In the N-terminal section; belongs to the protein kinase superfamily. Ser/Thr protein kinase family. It in the C-terminal section; belongs to the protein kinase superfamily. CAMK Ser/Thr protein kinase family.

It carries out the reaction L-seryl-[protein] + ATP = O-phospho-L-seryl-[protein] + ADP + H(+). The catalysed reaction is L-threonyl-[protein] + ATP = O-phospho-L-threonyl-[protein] + ADP + H(+). It catalyses the reaction S-ubiquitinyl-[E2 ubiquitin-conjugating enzyme]-L-cysteine + [acceptor protein]-L-lysine = [E2 ubiquitin-conjugating enzyme]-L-cysteine + N(6)-ubiquitinyl-[acceptor protein]-L-lysine.. It participates in protein modification; protein ubiquitination. In Dictyostelium discoideum (Social amoeba), this protein is Bifunctional serine/threonine-protein kinase/NEDD4-like E3 ubiquitin-protein ligase.